The primary structure comprises 39 residues: Mu-like prophage FluMu protein com (39 aa).

Belongs to the com family.

The polypeptide is Mu-like prophage FluMu protein com (Haemophilus influenzae (strain ATCC 51907 / DSM 11121 / KW20 / Rd)).